Reading from the N-terminus, the 175-residue chain is NADH-ubiquinone oxidoreductase chain 6 (175 aa).

Transmembrane regions (helical) follow at residues 1–21, 25–45, 47–67, 88–108, and 149–169; these read MTMYIAFILSTIFVIGFVGFS, SPIYGGLGLIVSGGVGCGIVL, FGGSFLGLMVFLIYLGGMLVV, TVFGAFVSGLMMEFCMVYYAL, and YGTWLVIVTGWSLLIGVVVIM.

Belongs to the complex I subunit 6 family. In terms of assembly, core subunit of respiratory chain NADH dehydrogenase (Complex I) which is composed of 45 different subunits.

Its subcellular location is the mitochondrion inner membrane. The enzyme catalyses a ubiquinone + NADH + 5 H(+)(in) = a ubiquinol + NAD(+) + 4 H(+)(out). Core subunit of the mitochondrial membrane respiratory chain NADH dehydrogenase (Complex I) which catalyzes electron transfer from NADH through the respiratory chain, using ubiquinone as an electron acceptor. Essential for the catalytic activity and assembly of complex I. This Sus scrofa (Pig) protein is NADH-ubiquinone oxidoreductase chain 6 (MT-ND6).